Reading from the N-terminus, the 351-residue chain is Biotin synthase (351 aa).

The 218-residue stretch at 48-265 (NKVRIHILDN…LCMFRLINPD (218 aa)) folds into the Radical SAM core domain. 3 residues coordinate [4Fe-4S] cluster: cysteine 63, cysteine 67, and cysteine 70. 4 residues coordinate [2Fe-2S] cluster: cysteine 107, cysteine 139, cysteine 199, and arginine 269.

The protein belongs to the radical SAM superfamily. Biotin synthase family. As to quaternary structure, homodimer. [4Fe-4S] cluster serves as cofactor. Requires [2Fe-2S] cluster as cofactor.

It carries out the reaction (4R,5S)-dethiobiotin + (sulfur carrier)-SH + 2 reduced [2Fe-2S]-[ferredoxin] + 2 S-adenosyl-L-methionine = (sulfur carrier)-H + biotin + 2 5'-deoxyadenosine + 2 L-methionine + 2 oxidized [2Fe-2S]-[ferredoxin]. It functions in the pathway cofactor biosynthesis; biotin biosynthesis; biotin from 7,8-diaminononanoate: step 2/2. In terms of biological role, catalyzes the conversion of dethiobiotin (DTB) to biotin by the insertion of a sulfur atom into dethiobiotin via a radical-based mechanism. This chain is Biotin synthase, found in Leptospira interrogans serogroup Icterohaemorrhagiae serovar copenhageni (strain Fiocruz L1-130).